Consider the following 1306-residue polypeptide: MDSVEEPQKKVFKARKTMRASDRQQLDAVHRVKGELLRADGKLLNGSHENGDLDPTSPLENTDCIQDREEVNGIDGICFQSEESTTEWKETPCMPNVAVKNKQEDLNSEALSPSITCDLSSRVTTEPGSGSPASDNPGCGTPVSDNPASDNPASDNPASDNPDSGDLAAGELATTVQATGDSACEEPPSSDPSSSDPTSSEPSSSEPTCSEPISGDPVSEEAASHDLVSGDSTCSEPVSGEPVSHEAASSEPATSEPASDEPVARVVAACELAPGESALDDCAPSGDSQSDEPPSSEDSLPRSVCSGLASGELTPGELSVEPATDTVKPSSSAVCEAGPDPDKTEPSSNNSDDCPGKSEDDEHLDQIQSKDSCDEGNKVNSNVVEKEEPLETHSAIICSDLPPENTTKIAEDPIAEPALEEEAISSSMEVDQSEKDEHKSPAEPVAAVSEDPAEEDKEDTVVDNTDSMETDEIIPILEKLAPTEDELSCFSKASLLPVETSQDLEDKMEGSFGSPSKQESSENLPKEAFLVLSDEEDLSCGKDESEAVAQSKMSTPEGEKSEKDGKAEEEERVPAEEQPPVRNEFSRRKRSKSEDMDSVESKRRRYMDEEYEAEFQVKITAKGDINQKLQKVIQWLLQEKLCALQCAVFDKTLAELKTRVEKIECNKRHKAVLTELQAKIARLTKRFGAAKDDLKKRQESPPNPPISPGKPANDTNSNNNMTYRNAGTVRQLLESKRNVSEGPPPSFQTPVNTVSSASHATSTAVVSSQPKLQTSATSGSLPAAPLLPAPSTATVVATTQVPSGTPQPTISLQPLPVILHVPVAVTSQPQLLQSHPGTLVTNQPSGNVEFISVQSQPTVSGLTKNPVSLPPLPNPTKPNIPSVPSPSSIQRNSSTTAAPLGTTLAVQAVPTAHSIVQATRTSLPTVGPSGLYSSSSSRGPIQMKIPISTFSPPSSAEQNSSATPRIVTENQTNKTVDSSINKKAADSTSQSGKASSSDSSGVIDLTMDDEESGTTQDPKKISPPSSSTVSTSQPMSRPLQPILPAPPLQPSGVPTSGPSQATIHVLPTAPTTVNVTHRPVTQVTTRLPVPRAPANHQVVYTTLPAPTTQAPLRGTVMQAPAVRQVNPQNSVTVRVPQTTTYVVNNGLTLGSAGPQLTVHHRPPQVHNEPPRPLHPAPLPEAPQPQRLPPEAASTSLPQKPHLKLARVQSQNGIVLSWSVLEVDRSCATVDSYHLYAYHEEPSATVPSQWKKIGEVKALPLPMACTLTQFVSGSKYYFAVRAKDIYGRFGPFCDPQSTDVISSSQNS.

Position 1 is an N-acetylmethionine (Met-1). The interval 1–23 is disordered; sequence MDSVEEPQKKVFKARKTMRASDR. Residue Lys-33 forms a Glycyl lysine isopeptide (Lys-Gly) (interchain with G-Cter in SUMO2) linkage. Residues Ser-57 and Ser-112 each carry the phosphoserine modification. 7 disordered regions span residues 104-470, 496-604, 689-722, 765-785, 871-895, 920-1060, and 1152-1196; these read EDLN…SMET, LPVE…SKRR, AAKD…NNMT, VVSS…PAAP, PLPN…NSST, RTSL…GPSQ, and AGPQ…STSL. 2 stretches are compositionally biased toward polar residues: residues 109–134 and 143–162; these read EALS…SPAS and VSDN…SDNP. A Phosphothreonine modification is found at Thr-124. 3 stretches are compositionally biased toward low complexity: residues 185–212, 246–261, and 284–303; these read EEPP…CSEP, EAAS…ASDE, and PSGD…LPRS. The segment covering 432-441 has biased composition (basic and acidic residues); it reads QSEKDEHKSP. Phosphoserine is present on residues Ser-511, Ser-514, Ser-516, and Ser-533. Residues 513 to 523 show a composition bias toward polar residues; that stretch reads GSPSKQESSEN. Composition is skewed to basic and acidic residues over residues 557–566, 592–601, and 689–699; these read EGEKSEKDGK, KSEDMDSVES, and AAKDDLKKRQE. The Nuclear localization signal signature appears at 587-605; that stretch reads RRKRSKSEDMDSVESKRRR. Lys-592 is covalently cross-linked (Glycyl lysine isopeptide (Lys-Gly) (interchain with G-Cter in SUMO2)). Residue Ser-593 is modified to Phosphoserine. Positions 596 to 851 are interaction with SETDB1; it reads MDSVESKRRR…NQPSGNVEFI (256 aa). Residues 666–696 adopt a coiled-coil conformation; sequence NKRHKAVLTELQAKIARLTKRFGAAKDDLKK. A phosphoserine mark is found at Ser-700 and Ser-707. Over residues 713-722 the composition is skewed to polar residues; it reads NDTNSNNNMT. The segment covering 871–884 has biased composition (pro residues); that stretch reads PLPNPTKPNIPSVP. Ser-933 bears the Phosphoserine mark. Residues Lys-944 and Lys-974 each participate in a glycyl lysine isopeptide (Lys-Gly) (interchain with G-Cter in SUMO2) cross-link. Residues 948 to 981 are compositionally biased toward polar residues; that stretch reads STFSPPSSAEQNSSATPRIVTENQTNKTVDSSIN. Residues 987–1000 are compositionally biased toward low complexity; sequence STSQSGKASSSDSS. Positions 1001–1011 are interaction with SUMO; the sequence is GVIDLTMDDEE. Residues 1022 to 1040 are compositionally biased toward low complexity; that stretch reads SPPSSSTVSTSQPMSRPLQ. Positions 1054-1143 constitute a Fibronectin type-III 1 domain; it reads PTSGPSQATI…RVPQTTTYVV (90 aa). Residues 1170 to 1187 are compositionally biased toward pro residues; sequence PRPLHPAPLPEAPQPQRL. An interaction with MBD1 region spans residues 1190 to 1306; the sequence is EAASTSLPQK…TDVISSSQNS (117 aa). Residues 1196-1302 enclose the Fibronectin type-III 2 domain; that stretch reads LPQKPHLKLA…DPQSTDVISS (107 aa).

The protein belongs to the MCAF family. Interacts with MBD1; the interaction is enhanced when MBD1 is sumoylated. Interacts with SETDB1; the interaction protects SETDB1 from proteasomal degradation and is required to stimulate histone methyltransferase activity and facilitate the conversion of dimethylated to trimethylated H3 'Lys-9'. Interacts with SUMO ubiquitin-like proteins (SUMO1, SUNO2 and SUMO3), with a preference for SUMO2 and SUMO3. Interacts with SP1, ATF7 and ZHX1. Interacts with the general transcription machinery, including ERCC2, ERCC3, GTF2E1, GTF2E2 and POLR2A. As to expression, ubiquitously expressed at all stages studied.

The protein resides in the nucleus. In terms of biological role, recruiter that couples transcriptional factors to general transcription apparatus and thereby modulates transcription regulation and chromatin formation. Can both act as an activator or a repressor depending on the context. Required for HUSH-mediated heterochromatin formation and gene silencing. Mediates MBD1-dependent transcriptional repression, probably by recruiting complexes containing SETDB1. Stabilizes SETDB1, is required to stimulate histone methyltransferase activity of SETDB1 and facilitates the conversion of dimethylated to trimethylated H3 'Lys-9' (H3K9me3). The complex formed with MBD1 and SETDB1 represses transcription and couples DNA methylation and histone H3 'Lys-9' trimethylation (H3K9me3). Facilitates telomerase TERT and TERC gene expression by SP1 in cancer cells. This chain is Activating transcription factor 7-interacting protein 1 (Atf7ip), found in Mus musculus (Mouse).